The following is a 354-amino-acid chain: Ferredoxin--NADP reductase (354 aa).

Aspartate 42, glutamine 50, tyrosine 55, isoleucine 95, phenylalanine 130, aspartate 299, and threonine 339 together coordinate FAD.

This sequence belongs to the ferredoxin--NADP reductase type 2 family. In terms of assembly, homodimer. FAD serves as cofactor.

It carries out the reaction 2 reduced [2Fe-2S]-[ferredoxin] + NADP(+) + H(+) = 2 oxidized [2Fe-2S]-[ferredoxin] + NADPH. In Acidovorax sp. (strain JS42), this protein is Ferredoxin--NADP reductase.